Here is a 44-residue protein sequence, read N- to C-terminus: Photosystem I reaction center subunit IX (44 aa).

A helical membrane pass occupies residues 7 to 27 (YLSTAPVLATLWFGSLAGLLI).

It belongs to the PsaJ family.

The protein resides in the plastid. Its subcellular location is the chloroplast thylakoid membrane. In terms of biological role, may help in the organization of the PsaE and PsaF subunits. This is Photosystem I reaction center subunit IX from Calycanthus floridus var. glaucus (Eastern sweetshrub).